We begin with the raw amino-acid sequence, 358 residues long: MSYTAPTDPVNKQEVVKLSQLCELCHGRKAVLRRPKNLQKICKECFYYVFETEIHNTIVSNNLFQRGEKVAIGASGGKDSTVLAHILKLLNDRHDYGVKLVLLSIDEGIVGYRDDSLATVKRNQKQYQLPLEIVSFRDLYDWTMDEIVAIAGIRNSCTYCGVFRRQALDRGAAKLDINHVVTGHNADDMAETVLMNILRGDVARLERSTAIITQSAGSPIRRSKPFKYCYQKEIVLYAHYKKLDYFSTECTYAPEAFRGTARELMKNLEAVRPSCIIDIIQSGENLVLKKKKRHPNSKVEFKDGNRCERCGYLSSNKICKACMLLQGLEKNRASMSIDNDTNVDGAARVMRTLEKLSF.

Belongs to the TtcA family. CTU1/NCS6/ATPBD3 subfamily.

The protein localises to the cytoplasm. The protein operates within tRNA modification; 5-methoxycarbonylmethyl-2-thiouridine-tRNA biosynthesis. Plays a central role in 2-thiolation of mcm(5)S(2)U at tRNA wobble positions of tRNA(Lys), tRNA(Glu) and tRNA(Gln). Directly binds tRNAs and probably acts by catalyzing adenylation of tRNAs, an intermediate required for 2-thiolation. It is unclear whether it acts as a sulfurtransferase that transfers sulfur from thiocarboxylated URM1 onto the uridine of tRNAs at wobble position. Prior mcm(5) tRNA modification by the elongator complex is required for 2-thiolation. May also be involved in protein urmylation. The chain is Cytoplasmic tRNA 2-thiolation protein 1 from Candida glabrata (strain ATCC 2001 / BCRC 20586 / JCM 3761 / NBRC 0622 / NRRL Y-65 / CBS 138) (Yeast).